A 247-amino-acid chain; its full sequence is Osmotin-like protein NP24-I (247 aa).

An N-terminal signal peptide occupies residues 1 to 21; it reads MGYLTSSFVLFFLLCVTYTYA. Disulfide bonds link Cys30/Cys225, Cys72/Cys82, Cys87/Cys93, Cys141/Cys213, Cys146/Cys196, Cys154/Cys164, Cys168/Cys177, and Cys178/Cys183.

Belongs to the thaumatin family. In terms of tissue distribution, highest levels of both isoforms found in the outer pericarp, with smaller amounts in the inner pericarp.

Its subcellular location is the cytoplasm. The protein localises to the vacuole. The enzyme catalyses Endohydrolysis of (1-&gt;3)- or (1-&gt;4)-linkages in beta-D-glucans when the glucose residue whose reducing group is involved in the linkage to be hydrolyzed is itself substituted at C-3.. Has antifungal activity against P.betae and F.dahliae. May be involved in disease resistance in tomatoes and/or have a possible role in fruit development and ripening. Binds to beta-glucans and exhibits beta-1,3-D-glucanase activity. The protein is Osmotin-like protein NP24-I of Solanum lycopersicum (Tomato).